Consider the following 326-residue polypeptide: Protease inhibitor (326 aa).

A signal peptide spans 1–24; the sequence is MKTIRTGMMTLAALAVLGTNVVSA. Repeat copies occupy residues 177-208 and 272-304. The 2 X 32 AA approximate repeats stretch occupies residues 177-304; it reads IILHVDKETK…DLKAEMKVFA (128 aa).

In terms of processing, proteolytically cleaved to yield at least three forms (BBRPI-A, -B, and -C).

It is found in the secreted. Functionally, shows inhibitory activity towards serine proteases, such as trypsin, chymotrypsin and subtilisin. May form a trypsin-inhibitor complex in a molar ratio of 1:1. This chain is Protease inhibitor, found in Brevibacillus choshinensis.